Here is a 397-residue protein sequence, read N- to C-terminus: Phosphoglycerate kinase (397 aa).

Substrate is bound by residues 21 to 23, arginine 36, 59 to 62, arginine 114, and arginine 147; these read DMN and HLGR. ATP contacts are provided by residues lysine 198, glutamate 320, and 346 to 349; that span reads GGDT.

This sequence belongs to the phosphoglycerate kinase family. As to quaternary structure, monomer.

It localises to the cytoplasm. It catalyses the reaction (2R)-3-phosphoglycerate + ATP = (2R)-3-phospho-glyceroyl phosphate + ADP. It functions in the pathway carbohydrate degradation; glycolysis; pyruvate from D-glyceraldehyde 3-phosphate: step 2/5. This is Phosphoglycerate kinase from Neisseria gonorrhoeae (strain NCCP11945).